The chain runs to 172 residues: 3-hydroxydecanoyl-[acyl-carrier-protein] dehydratase (172 aa).

Histidine 71 is an active-site residue.

Belongs to the thioester dehydratase family. FabA subfamily. As to quaternary structure, homodimer.

The protein resides in the cytoplasm. It carries out the reaction a (3R)-hydroxyacyl-[ACP] = a (2E)-enoyl-[ACP] + H2O. It catalyses the reaction (3R)-hydroxydecanoyl-[ACP] = (2E)-decenoyl-[ACP] + H2O. The catalysed reaction is (2E)-decenoyl-[ACP] = (3Z)-decenoyl-[ACP]. Its pathway is lipid metabolism; fatty acid biosynthesis. In terms of biological role, necessary for the introduction of cis unsaturation into fatty acids. Catalyzes the dehydration of (3R)-3-hydroxydecanoyl-ACP to E-(2)-decenoyl-ACP and then its isomerization to Z-(3)-decenoyl-ACP. Can catalyze the dehydratase reaction for beta-hydroxyacyl-ACPs with saturated chain lengths up to 16:0, being most active on intermediate chain length. This is 3-hydroxydecanoyl-[acyl-carrier-protein] dehydratase from Escherichia coli O139:H28 (strain E24377A / ETEC).